Here is a 727-residue protein sequence, read N- to C-terminus: Broad-complex core protein isoforms 1/2/3/4/5 (727 aa).

The BTB domain maps to 32-97 (VDVTLACEGR…IYHGEVNVHQ (66 aa)). Polar residues predominate over residues 135 to 149 (NSGGRTPLNTHTQSL). 5 disordered regions span residues 135–185 (NSGG…SLPS), 218–378 (RGSD…IGDG), 445–496 (INNS…RPTA), 532–583 (PQQQ…ANTP), and 604–626 (STSGSANSSLNNSNSTLNTSGGL). A compositionally biased stretch (low complexity) spans 227–238 (SGAVGSGSNNNS). Residues 281–298 (TGNGNSGNGNGNGNGASN) are compositionally biased toward gly residues. Residues 341–355 (NDEHSNDSTGEHDAN) show a composition bias toward basic and acidic residues. Composition is skewed to low complexity over residues 445–460 (INNSITNNNNNNNNNN), 475–495 (TPSPTTTTLTTPTTTTPTRPT), and 533–568 (QQQQQQQQQHQMSQQQQQQQQQQQQQGNSSSGQQQQ). 2 consecutive C2H2-type zinc fingers follow at residues 636-659 (FRCNPCNKNLSSLTRLKRHIQNVH) and 666-689 (PVCNICKRVYSSLNSLRNHKSIYH). Residues 694-727 (QPKQEPGVGATQAAANSFYHQQHQQQQLNHHSSS) form a disordered region. Low complexity predominate over residues 713–727 (HQQHQQQQLNHHSSS).

The protein localises to the nucleus. Its function is as follows. Broad-complex proteins are required for puffing and transcription of salivary gland late genes during metamorphosis. The sequence is that of Broad-complex core protein isoforms 1/2/3/4/5 (br) from Drosophila melanogaster (Fruit fly).